Here is a 459-residue protein sequence, read N- to C-terminus: Probable rhamnogalacturonase C (459 aa).

An N-terminal signal peptide occupies residues 1–18 (MRASILPLTLFLATLAGA). Residues N36, N64, N77, N140, and N155 are each glycosylated (N-linked (GlcNAc...) asparagine). Residues C39 and C65 are joined by a disulfide bond. The Proton donor role is filled by D216. A disulfide bridge connects residues C218 and C235. Residues N236 and N251 are each glycosylated (N-linked (GlcNAc...) asparagine). H290 is an active-site residue. A glycan (N-linked (GlcNAc...) asparagine) is linked at N315. A disulfide bond links C337 and C343. An N-linked (GlcNAc...) asparagine glycan is attached at N356. A disulfide bridge connects residues C365 and C374.

Belongs to the glycosyl hydrolase 28 family.

Its subcellular location is the secreted. Its function is as follows. Pectinolytic enzymes consist of four classes of enzymes: pectine lyase, polygalacturonase, pectin methylesterase and rhamnogalacturonase. Hydrolyzes alpha-D-galacturonopyranosyl-(1,2)-alpha-L-rhamnopyranosyl linkages in the backbone of the hairy regions of pectins. This Aspergillus niger (strain ATCC MYA-4892 / CBS 513.88 / FGSC A1513) protein is Probable rhamnogalacturonase C (rhgC).